Reading from the N-terminus, the 828-residue chain is MTRSPLRRLIFGALRRLLYLWVRSETINQSAMSLQLDRSRPVFYALPSPSLTDLAVLDHECTKAGLPRPVLPVAVGTLHEPAGFFYLTPDPDWLGRHDKRGAPPTLERVIAAVSQHAEEDAQIIPVSVFWGQTPASESSPWKLLFADSWAVTGRLRRLLTILILGRKTRVQFSAPIQVRDLVQHNKGHERTVRMAQRLMRVHFRNLKTAVIGPDISHRRNLVKGLVHAPLVRQAINEQAQRENIPVAKAEAQALRYGNEIASDYTYTAIRFLEVVLSWFWNKIYDGIKVNHIEQVQGIAPGHEVIYVPCHRSHIDYLLLSYLLFRNGLTPPHIAAGINLNMPVIGGLLRRGGAFFMRRTFKGNPLYTAVFNEYLHTLFTKGFPVEYFVEGGRSRTGRMLQPRTGMLAITLRSFLRSSRTPIVFVPVYIGYERVLEGRTYLGELRGASKKKESIFDIFKVIGALKQRFGQVYVNFGEPIRLAGFLDQQQPGWREQALGPQFRPAWLNETTTRLGETVARHLNEAAAVNPVNLVALALLSTSRLALDESALTRVLDLYLTLLRKVPYSQHTTLPEGDGQALIEHVRGMNLLAEQKDALGRILYLDEANAVLMTYYRNNVLHIFALPALLASFFHSSSRMSRDLLGQYVHALYPYLQAELFLRWAPEQLDEVIDQWLAALVEQGLLRRENDLYVRPAPSSRQFVLLTLLARTITQTLQRFYMATSLLLNSGQNTLSAEALEDLCVMMAQRLSILHGLNAPEFFDKTLFRHFIQTLVEQGVLRPDGNGKLGYHDKLGELAEGVAKRVLSAELRLSIRQVALHREHALEASIL.

Positions 309–314 (CHRSHI) match the HXXXXD motif motif.

This sequence belongs to the GPAT/DAPAT family.

The protein resides in the cell inner membrane. It carries out the reaction sn-glycerol 3-phosphate + an acyl-CoA = a 1-acyl-sn-glycero-3-phosphate + CoA. It participates in phospholipid metabolism; CDP-diacylglycerol biosynthesis; CDP-diacylglycerol from sn-glycerol 3-phosphate: step 1/3. This Pseudomonas putida (strain W619) protein is Glycerol-3-phosphate acyltransferase.